The sequence spans 1050 residues: Mitotic checkpoint serine/threonine-protein kinase BUB1 beta (1050 aa).

The region spanning 62–226 is the BUB1 N-terminal domain; it reads FEYEIRFYTG…FESSVPQRST (165 aa). Residues 111 to 118 carry the Nuclear localization signal motif; sequence GEKRYYSD. Residues 152–185 are necessary for interaction with KNL1; that stretch reads AQFYISWAEEYEARENFRKADAIFQEGIQQKAEP. The short motif at 224-232 is the D-box element; sequence RSTLAELKS. N6-acetyllysine; by PCAF is present on Lys250. A Phosphoserine modification is found at Ser367. The interval 368 to 393 is disordered; the sequence is TRKPGKEEGDPLQRVQSHQQASEEKK. At Ser435 the chain carries Phosphoserine. The disordered stretch occupies residues 456-480; the sequence is IQTTQQERTGDQQEETMPTKETTKL. Residues Ser543, Ser665, and Ser670 each carry the phosphoserine modification. Position 676 is a phosphoserine; by PLK1 (Ser676). Residue Ser697 is modified to Phosphoserine. In terms of domain architecture, Protein kinase spans 766 to 1050; that stretch reads YCIKREYLIC…LTSPGALLFQ (285 aa). ATP is bound at residue 772–780; sequence YLICEDYKL. Thr792 carries the phosphothreonine; by PLK1 modification. Lys795 serves as a coordination point for ATP. The Proton acceptor role is filled by Asp882. Thr1008 bears the Phosphothreonine; by PLK1 mark. Position 1042 is a phosphothreonine (Thr1042). At Ser1043 the chain carries Phosphoserine.

It belongs to the protein kinase superfamily. Ser/Thr protein kinase family. BUB1 subfamily. In terms of assembly, interacts with CENPE. Interacts with PLK1. Part of a complex containing BUB3, CDC20 and BUB1B. Interacts with anaphase-promoting complex/cyclosome (APC/C). Interacts with KNL1. Interacts with KAT2B. Interacts with RIPK3. Interacts with the closed conformation form of MAD2L1. In terms of processing, proteolytically cleaved by caspase-3 in a cell cycle specific manner. The cleavage might be involved in the durability of the cell cycle delay. Caspase-3 cleavage is associated with abrogation of the mitotic checkpoint. The major site of cleavage is at Asp-610. Acetylation at Lys-250 regulates its degradation and timing in anaphase entry. Post-translationally, ubiquitinated. Degraded by the proteasome. Ubiquitinated by UBR5, promoting disassembly of the mitotic checkpoint complex from the APC/C complex. In terms of processing, sumoylated with SUMO2 and SUMO3. The sumoylation mediates the association with CENPE at the kinetochore. Autophosphorylated in vitro. Intramolecular autophosphorylation is stimulated by CENPE. Phosphorylated during mitosis and hyperphosphorylated in mitotically arrested cells. Phosphorylation at Ser-670 and Ser-1043 occurs at kinetochores upon mitotic entry with dephosphorylation at the onset of anaphase. In terms of tissue distribution, highly expressed in thymus followed by spleen. Preferentially expressed in tissues with a high mitotic index.

It is found in the cytoplasm. The protein resides in the nucleus. The protein localises to the chromosome. It localises to the centromere. Its subcellular location is the kinetochore. It is found in the cytoskeleton. The protein resides in the microtubule organizing center. The protein localises to the centrosome. It carries out the reaction L-seryl-[protein] + ATP = O-phospho-L-seryl-[protein] + ADP + H(+). The enzyme catalyses L-threonyl-[protein] + ATP = O-phospho-L-threonyl-[protein] + ADP + H(+). Kinase activity stimulated by CENPE. Essential component of the mitotic checkpoint. Required for normal mitosis progression. The mitotic checkpoint delays anaphase until all chromosomes are properly attached to the mitotic spindle. One of its checkpoint functions is to inhibit the activity of the anaphase-promoting complex/cyclosome (APC/C) by blocking the binding of CDC20 to APC/C, independently of its kinase activity. The other is to monitor kinetochore activities that depend on the kinetochore motor CENPE. Required for kinetochore localization of CENPE. Negatively regulates PLK1 activity in interphase cells and suppresses centrosome amplification. Also implicated in triggering apoptosis in polyploid cells that exit aberrantly from mitotic arrest. May play a role for tumor suppression. In Homo sapiens (Human), this protein is Mitotic checkpoint serine/threonine-protein kinase BUB1 beta (BUB1B).